The chain runs to 1265 residues: Methionine synthase (1265 aa).

The region spanning 19 to 338 is the Hcy-binding domain; that stretch reads QDEIEAILQE…DHIREIAEAV (320 aa). Residues Cys-260, Cys-323, and Cys-324 each coordinate Zn(2+). One can recognise a Pterin-binding domain in the interval 371–632; that stretch reads FVNIGERCNV…IHKELLQLCE (262 aa). (6S)-5,6,7,8-tetrahydrofolate contacts are provided by residues 382–384, Asp-449, Asn-470, Asp-537, Asn-579, Arg-585, and Arg-591; that span reads GSR. The B12-binding N-terminal domain occupies 662 to 759; it reads QTDEWRNGPL…FMEKEREETK (98 aa). Residues Glu-709, 782–786, His-785, Ser-830, Thr-834, and Ala-886 each bind methylcob(III)alamin; that span reads GDVHD. Residues 772–907 form the B12-binding domain; that stretch reads QGTIVLATVK…DENLKDEYFE (136 aa). The 343-residue stretch at 923–1265 folds into the AdoMet activation domain; sequence SLKERRYLTL…LGPILGYDTD (343 aa). S-adenosyl-L-methionine contacts are provided by residues Asp-974, Arg-1172, and 1227–1228; that span reads YF. Thr-1264 carries the post-translational modification Phosphothreonine.

This sequence belongs to the vitamin-B12 dependent methionine synthase family. In terms of assembly, monomer. Dimer. Forms a multiprotein complex with MMACHC, MMADHC and MTRR. Methylcob(III)alamin is required as a cofactor. Requires Zn(2+) as cofactor.

The protein localises to the cytoplasm. It carries out the reaction (6S)-5-methyl-5,6,7,8-tetrahydrofolate + L-homocysteine = (6S)-5,6,7,8-tetrahydrofolate + L-methionine. The protein operates within amino-acid biosynthesis; L-methionine biosynthesis via de novo pathway; L-methionine from L-homocysteine (MetH route): step 1/1. Functionally, catalyzes the transfer of a methyl group from methylcob(III)alamin (MeCbl) to homocysteine, yielding enzyme-bound cob(I)alamin and methionine in the cytosol. MeCbl is an active form of cobalamin (vitamin B12) used as a cofactor for methionine biosynthesis. Cob(I)alamin form is regenerated to MeCbl by a transfer of a methyl group from 5-methyltetrahydrofolate. The processing of cobalamin in the cytosol occurs in a multiprotein complex composed of at least MMACHC, MMADHC, MTRR (methionine synthase reductase) and MTR which may contribute to shuttle safely and efficiently cobalamin towards MTR in order to produce methionine. The chain is Methionine synthase (MTR) from Bos taurus (Bovine).